A 367-amino-acid polypeptide reads, in one-letter code: Phospho-N-acetylmuramoyl-pentapeptide-transferase (367 aa).

Transmembrane regions (helical) follow at residues 13 to 33 (ISGI…ALTL), 49 to 69 (LPLL…VPLL), 95 to 115 (MGGI…SNFA), 119 to 139 (LAVS…DWQI), 154 to 174 (LALQ…NQPA), 183 to 203 (WVSF…FVLV), 215 to 235 (IDGL…AIVA), 237 to 257 (TSPA…GFLA), 281 to 301 (AVAL…IFFV), and 347 to 367 (VSSF…IAPF).

This sequence belongs to the glycosyltransferase 4 family. MraY subfamily. Mg(2+) is required as a cofactor.

The protein resides in the cell inner membrane. The enzyme catalyses UDP-N-acetyl-alpha-D-muramoyl-L-alanyl-gamma-D-glutamyl-meso-2,6-diaminopimeloyl-D-alanyl-D-alanine + di-trans,octa-cis-undecaprenyl phosphate = di-trans,octa-cis-undecaprenyl diphospho-N-acetyl-alpha-D-muramoyl-L-alanyl-D-glutamyl-meso-2,6-diaminopimeloyl-D-alanyl-D-alanine + UMP. Its pathway is cell wall biogenesis; peptidoglycan biosynthesis. Catalyzes the initial step of the lipid cycle reactions in the biosynthesis of the cell wall peptidoglycan: transfers peptidoglycan precursor phospho-MurNAc-pentapeptide from UDP-MurNAc-pentapeptide onto the lipid carrier undecaprenyl phosphate, yielding undecaprenyl-pyrophosphoryl-MurNAc-pentapeptide, known as lipid I. This Trichormus variabilis (strain ATCC 29413 / PCC 7937) (Anabaena variabilis) protein is Phospho-N-acetylmuramoyl-pentapeptide-transferase.